Reading from the N-terminus, the 320-residue chain is Adhesin MafA 1/4 (320 aa).

Residues 1 to 18 (MRARLLIPILFSVFILSA) form the signal peptide. A lipid anchor (N-palmitoyl cysteine) is attached at C19. C19 carries S-diacylglycerol cysteine lipidation. The segment at 287-320 (NHTGNSAPSVEADNSHEGYGYSDEAVRQHRQGQP) is disordered.

Belongs to the MafA family.

Its subcellular location is the cell outer membrane. In Neisseria gonorrhoeae (strain ATCC 700825 / FA 1090), this protein is Adhesin MafA 1/4 (mafA1).